The sequence spans 434 residues: Histidinol dehydrogenase (434 aa).

Residues Tyr-130, Gln-188, and Asn-211 each coordinate NAD(+). Ser-237, Gln-259, and His-262 together coordinate substrate. Positions 259 and 262 each coordinate Zn(2+). Catalysis depends on proton acceptor residues Glu-326 and His-327. Substrate is bound by residues His-327, Asp-360, Glu-414, and His-419. Asp-360 provides a ligand contact to Zn(2+). His-419 is a Zn(2+) binding site.

The protein belongs to the histidinol dehydrogenase family. Homodimer. Requires Zn(2+) as cofactor.

It carries out the reaction L-histidinol + 2 NAD(+) + H2O = L-histidine + 2 NADH + 3 H(+). The protein operates within amino-acid biosynthesis; L-histidine biosynthesis; L-histidine from 5-phospho-alpha-D-ribose 1-diphosphate: step 9/9. Functionally, catalyzes the sequential NAD-dependent oxidations of L-histidinol to L-histidinaldehyde and then to L-histidine. This Escherichia coli O6:H1 (strain CFT073 / ATCC 700928 / UPEC) protein is Histidinol dehydrogenase.